We begin with the raw amino-acid sequence, 308 residues long: Transmembrane and ubiquitin-like domain-containing protein 1 (308 aa).

The helical transmembrane segment at 11 to 31 (VTVLFALVLFFMVLMLAWVST) threads the bilayer. Residues 39–162 (THWIRPEPAQ…GLGDGTTAQS (124 aa)) are disordered. Residues 63-93 (PSQTLTNADPNSETVDSSDSTQSSREFQNAG) are compositionally biased toward polar residues. A compositionally biased stretch (low complexity) spans 103–115 (SSSGSTVSTGGSV). Positions 132 to 149 (PNFTVSSRDPQAGASSSL) are enriched in polar residues. One can recognise a Ubiquitin-like domain in the interval 169-242 (IHLRLKFLND…LHCHISQHAS (74 aa)). The next 2 membrane-spanning stretches (helical) occupy residues 253–273 (VPLNVGNLLVPLLFLIVMLLW) and 283–303 (FTGTATACLGGFTLLISAIAF).

It localises to the membrane. Its subcellular location is the cytoplasm. The protein localises to the nucleus. Its function is as follows. May contribute to the regulation of translation during cell-cycle progression. May contribute to the regulation of cell proliferation. The membrane form is involved in sterol-regulated ubiquitination and degradation of HMG-CoA reductase HMGCR. May be involved in centrosome assembly. The protein is Transmembrane and ubiquitin-like domain-containing protein 1 (tmub1) of Xenopus laevis (African clawed frog).